A 270-amino-acid chain; its full sequence is Putative phosphoenolpyruvate synthase regulatory protein (270 aa).

150–157 provides a ligand contact to ADP; that stretch reads GVSRCGKT.

Belongs to the pyruvate, phosphate/water dikinase regulatory protein family. PSRP subfamily.

It catalyses the reaction [pyruvate, water dikinase] + ADP = [pyruvate, water dikinase]-phosphate + AMP + H(+). The catalysed reaction is [pyruvate, water dikinase]-phosphate + phosphate + H(+) = [pyruvate, water dikinase] + diphosphate. Functionally, bifunctional serine/threonine kinase and phosphorylase involved in the regulation of the phosphoenolpyruvate synthase (PEPS) by catalyzing its phosphorylation/dephosphorylation. This chain is Putative phosphoenolpyruvate synthase regulatory protein, found in Aeromonas salmonicida (strain A449).